Reading from the N-terminus, the 809-residue chain is G-type lectin S-receptor-like serine/threonine-protein kinase At1g61480 (809 aa).

The N-terminal stretch at 1 to 24 (MGKKRIMFFASLLLITIFLSFSYA) is a signal peptide. Positions 25–144 (GITRESPLSI…NSGRTLWESF (120 aa)) constitute a Bulb-type lectin domain. Topologically, residues 25–425 (GITRESPLSI…SELGGNKRNK (401 aa)) are extracellular. N-linked (GlcNAc...) asparagine glycans are attached at residues asparagine 53, asparagine 88, asparagine 94, asparagine 103, asparagine 117, asparagine 134, and asparagine 236. Residues 278 to 314 (PENSCDIYGFCGPFGICVMSVPPKCKCFKGFVPKSIE) form the EGF-like domain. 2 cysteine pairs are disulfide-bonded: cysteine 282–cysteine 294 and cysteine 288–cysteine 302. N-linked (GlcNAc...) asparagine glycosylation is found at asparagine 320 and asparagine 375. The PAN domain occupies 333–415 (CQGNTNGKTV…GEILSIRLAS (83 aa)). 2 disulfide bridges follow: cysteine 368–cysteine 389 and cysteine 372–cysteine 378. A helical membrane pass occupies residues 426 to 446 (IIVASIVSLSLFVILAFAAFC). Over 447-809 (FLRYKVKHTV…EMTQSVILGR (363 aa)) the chain is Cytoplasmic. Positions 496–781 (FSLSNKLGQG…DLTSPKQPTF (286 aa)) constitute a Protein kinase domain. Residues 502–510 (LGQGGFGSV) and lysine 524 each bind ATP. Residues serine 530 and serine 545 each carry the phosphoserine modification. The interval 585-602 (RKRLEIDWPKRFNIIEGI) is caM-binding. Aspartate 621 acts as the Proton acceptor in catalysis. Serine 625 and serine 638 each carry phosphoserine. Residue threonine 655 is modified to Phosphothreonine. A phosphoserine mark is found at serine 698 and serine 792.

This sequence belongs to the protein kinase superfamily. Ser/Thr protein kinase family.

It is found in the cell membrane. The catalysed reaction is L-seryl-[protein] + ATP = O-phospho-L-seryl-[protein] + ADP + H(+). The enzyme catalyses L-threonyl-[protein] + ATP = O-phospho-L-threonyl-[protein] + ADP + H(+). This is G-type lectin S-receptor-like serine/threonine-protein kinase At1g61480 from Arabidopsis thaliana (Mouse-ear cress).